Consider the following 155-residue polypeptide: WPP domain-containing protein 1 (155 aa).

Disordered stretches follow at residues 1–41 and 124–155; these read MAET…VTIS and SVKA…SSEA. Low complexity predominate over residues 7–39; the sequence is ESITTSSPPPISETENSTTLPTTETEKNPNPVT. The segment at 28–131 is WPP; it reads TTETEKNPNP…LESVKAKSNV (104 aa). The segment covering 146-155 has biased composition (basic and acidic residues); it reads VDSKIDSSEA.

In terms of assembly, binds to FPP proteins. Interacts with WAP, WIP1, WIP2 and WIP3 through its WPP domain. Interacts with HSP70-1, HSP70-3 and WIT1. Component of a ternary complex composed of WPP1, HSP70-1 and WIT1. Expressed in roots, stems and leaves.

It localises to the nucleus envelope. The protein resides in the cytoplasm. It is found in the nucleus. Its subcellular location is the golgi apparatus. The protein localises to the nucleus matrix. Its function is as follows. Regulates the mitotic activity in roots. Plays a role with HSP70-1 in facilitating WIT1 nuclear envelope targeting. This is WPP domain-containing protein 1 (WPP1) from Arabidopsis thaliana (Mouse-ear cress).